Reading from the N-terminus, the 98-residue chain is Large ribosomal subunit protein uL23 (98 aa).

The protein belongs to the universal ribosomal protein uL23 family. In terms of assembly, part of the 50S ribosomal subunit. Contacts protein L29, and trigger factor when it is bound to the ribosome.

One of the early assembly proteins it binds 23S rRNA. One of the proteins that surrounds the polypeptide exit tunnel on the outside of the ribosome. Forms the main docking site for trigger factor binding to the ribosome. In Bordetella petrii (strain ATCC BAA-461 / DSM 12804 / CCUG 43448), this protein is Large ribosomal subunit protein uL23.